Reading from the N-terminus, the 137-residue chain is MANFKITISDTKGKSMSKELKDSDANPLLGLELGQETDASVVGLNGKLKLTGGSDKSGVPMRNDIHGAARKYVLLSKGVGLQDAEKGQRVRKLMRGNTVSEEIYQINCKFDGELPVEEAPAEDAPESAEEKSEDKKE.

Over residues 114–127 (LPVEEAPAEDAPES) the composition is skewed to acidic residues. Positions 114–137 (LPVEEAPAEDAPESAEEKSEDKKE) are disordered. Residues 128–137 (AEEKSEDKKE) are compositionally biased toward basic and acidic residues.

The protein belongs to the eukaryotic ribosomal protein eS6 family.

The protein is Small ribosomal subunit protein eS6 of Nitrosopumilus maritimus (strain SCM1).